Consider the following 548-residue polypeptide: Chaperonin GroEL (548 aa).

Residues 30-33 (TLGP), Lys51, 87-91 (DGTTT), Gly415, 479-481 (NAA), and Asp495 each bind ATP.

Belongs to the chaperonin (HSP60) family. In terms of assembly, forms a cylinder of 14 subunits composed of two heptameric rings stacked back-to-back. Interacts with the co-chaperonin GroES.

It is found in the cytoplasm. The enzyme catalyses ATP + H2O + a folded polypeptide = ADP + phosphate + an unfolded polypeptide.. Functionally, together with its co-chaperonin GroES, plays an essential role in assisting protein folding. The GroEL-GroES system forms a nano-cage that allows encapsulation of the non-native substrate proteins and provides a physical environment optimized to promote and accelerate protein folding. The sequence is that of Chaperonin GroEL from Vibrio campbellii (strain ATCC BAA-1116).